The sequence spans 37 residues: M-oxotoxin-Ot2b (37 aa).

Expressed by the venom gland.

The protein resides in the secreted. Its function is as follows. Disrupts biological membranes, particularly those rich in phosphocholine. Has antimicrobial activity against Gram-negative bacterium E.coli, Gram-positive bacteria B.subtilis and S.aureus, and hemolytic activity against sheep, pig and guinea pig red blood cells. Has insecticidal activity against S.frugiperda ovarian cells by opening non-selective ion channels. Enhances the insecticidal activity of spider venom neurotoxic peptides. The chain is M-oxotoxin-Ot2b from Oxyopes takobius (Lynx spider).